The following is a 1469-amino-acid chain: Accumulation-associated protein (1469 aa).

A signal peptide spans 1-52 (MGKRRQGPINKKVDFLPNKLNKYSIRKFTVGTASILLGSTLIFGSSSHEAKA). Disordered stretches follow at residues 52–164 (AAEE…SEPV), 486–511 (GIET…TPTT), and 528–1443 (EIKP…QANE). Composition is skewed to polar residues over residues 75–94 (ENTN…STLQ) and 110–125 (KANS…SEAP). Residues 129–144 (DLARKEDIPAVSKNEE) are compositionally biased toward basic and acidic residues. A compositionally biased stretch (polar residues) spans 145-164 (LQSSQPNTDSKIEPTTSEPV). 7 consecutive G5 domains span residues 446–528 (PKAV…GGEE), 574–656 (YGPV…GGEE), 702–784 (YGPV…GGEE), 830–912 (YGPV…GGEE), 958–1040 (YGPV…GGEE), 1086–1168 (YGPV…GGEQ), and 1211–1296 (VTKY…GPTK). Over residues 489–500 (TTTTPTYVNPNT) the composition is skewed to low complexity. Basic and acidic residues-rich tracts occupy residues 528 to 537 (EIKPGHKDEF) and 589 to 613 (PFDK…KGEP). A compositionally biased stretch (low complexity) spans 614-629 (GTKTITTPTTKNPLTG). 2 stretches are compositionally biased toward basic and acidic residues: residues 631–646 (KVGE…KQPV) and 655–665 (EEIKPGHKDEF). Over residues 738-757 (KGEPGTKTITTPTTKNPLTG) the composition is skewed to low complexity. 2 stretches are compositionally biased toward basic and acidic residues: residues 759-793 (KVGE…KDEF) and 845-869 (PFDK…KGEP). The segment covering 870-885 (GTKTITTPTTKNPLTG) has biased composition (low complexity). The span at 887 to 921 (KVGEGEPTEKVTKQPVDEIVHYGGEEIKPGHKDEF) shows a compositional bias: basic and acidic residues. The span at 994–1013 (KGEPGTKTITTPTTKNPLTG) shows a compositional bias: low complexity. The span at 1015–1049 (KVGEGEPTEKITKQPVDEIVHYGGEEIKPGHKDEF) shows a compositional bias: basic and acidic residues. Residues 1122-1141 (KGEPGTKTITTPTTKNPLTG) are compositionally biased toward low complexity. Basic and acidic residues-rich tracts occupy residues 1143–1162 (KVGE…DEIV), 1229–1253 (PFDK…KGEP), and 1271–1286 (KVGE…KQPV). Positions 1409 to 1443 (TPTQSGAPEQPNRSMHSTDNKNQLPDTGENRQANE) are enriched in polar residues. The LPXTG sorting signal signature appears at 1432–1436 (LPDTG). Position 1435 is a pentaglycyl murein peptidoglycan amidated threonine (Thr1435). The propeptide at 1436–1469 (GENRQANEGTLVGSLLAIVGSLFIFGRRKKGNEK) is removed by sortase.

The protein localises to the secreted. Its subcellular location is the cell wall. This Staphylococcus epidermidis (strain ATCC 12228 / FDA PCI 1200) protein is Accumulation-associated protein.